The primary structure comprises 62 residues: Potassium channel toxin alpha-KTx 22.1 (62 aa).

The signal sequence occupies residues 1 to 18; the sequence is MQKLFIVFVLFCILRLDA. 3 disulfides stabilise this stretch: C28–C46, C33–C59, and C37–C61.

The protein belongs to the short scorpion toxin superfamily. Potassium channel inhibitor family. Alpha-KTx 22 subfamily. As to expression, expressed by the venom gland.

The protein localises to the secreted. Its function is as follows. May block potassium channels. This Olivierus martensii (Manchurian scorpion) protein is Potassium channel toxin alpha-KTx 22.1.